The primary structure comprises 435 residues: Gamma-glutamyl phosphate reductase (435 aa).

Belongs to the gamma-glutamyl phosphate reductase family.

The protein resides in the cytoplasm. The catalysed reaction is L-glutamate 5-semialdehyde + phosphate + NADP(+) = L-glutamyl 5-phosphate + NADPH + H(+). The protein operates within amino-acid biosynthesis; L-proline biosynthesis; L-glutamate 5-semialdehyde from L-glutamate: step 2/2. In terms of biological role, catalyzes the NADPH-dependent reduction of L-glutamate 5-phosphate into L-glutamate 5-semialdehyde and phosphate. The product spontaneously undergoes cyclization to form 1-pyrroline-5-carboxylate. This chain is Gamma-glutamyl phosphate reductase, found in Synechococcus sp. (strain WH7803).